Consider the following 633-residue polypeptide: Phosphomethylpyrimidine synthase (633 aa).

Substrate is bound by residues Asn-245, Met-274, Tyr-303, His-339, Ser-359–Gly-361, Asp-400–Arg-403, and Glu-439. His-443 serves as a coordination point for Zn(2+). Tyr-466 serves as a coordination point for substrate. Zn(2+) is bound at residue His-507. Positions 587, 590, and 595 each coordinate [4Fe-4S] cluster.

Belongs to the ThiC family. In terms of assembly, homodimer. [4Fe-4S] cluster is required as a cofactor.

The catalysed reaction is 5-amino-1-(5-phospho-beta-D-ribosyl)imidazole + S-adenosyl-L-methionine = 4-amino-2-methyl-5-(phosphooxymethyl)pyrimidine + CO + 5'-deoxyadenosine + formate + L-methionine + 3 H(+). The protein operates within cofactor biosynthesis; thiamine diphosphate biosynthesis. Functionally, catalyzes the synthesis of the hydroxymethylpyrimidine phosphate (HMP-P) moiety of thiamine from aminoimidazole ribotide (AIR) in a radical S-adenosyl-L-methionine (SAM)-dependent reaction. The chain is Phosphomethylpyrimidine synthase from Neisseria meningitidis serogroup C / serotype 2a (strain ATCC 700532 / DSM 15464 / FAM18).